Consider the following 103-residue polypeptide: MANQRIRIRLKAFDHRLIDQSAQEIVDTAKRTGAQVTGPIPLPTRKERFTVLVSPHVNKDARDQYEIRTHKRLVDIVEPTDKTVDALMKLDLAAGVDVQISLG.

Belongs to the universal ribosomal protein uS10 family. As to quaternary structure, part of the 30S ribosomal subunit.

Its function is as follows. Involved in the binding of tRNA to the ribosomes. The protein is Small ribosomal subunit protein uS10 of Alcanivorax borkumensis (strain ATCC 700651 / DSM 11573 / NCIMB 13689 / SK2).